Consider the following 222-residue polypeptide: MRVSQSLVPFAIIALVLSFVNAYDPSPLQDFCVAIDDLKGVFVNGRFCKDPKRVDAKDFFFSGLNVPGNTNNQVGSNVTTVNVDQIPGLNTMGISLVRIDYAPHGQNPPHTHPRGSEILVLVEGTLYVGFVSSNQDNNRLFAKVLHPGDVFVFPIGMIHFQVNVGKIPAVAFAGLSSQNAGVITIANTVFGSNPPIYPELLARAFQLDASVVKELQAKFGSI.

A signal peptide spans 1–22 (MRVSQSLVPFAIIALVLSFVNA). A disulfide bond links Cys-32 and Cys-48. The 152-residue stretch at 62–213 (SGLNVPGNTN…AFQLDASVVK (152 aa)) folds into the Cupin type-1 domain. The N-linked (GlcNAc...) asparagine glycan is linked to Asn-77. Mn(2+) is bound by residues His-110, His-112, Glu-117, and His-159.

It belongs to the germin family. Oligomer (believed to be a pentamer but probably hexamer). Expressed in stems and developing embryos.

It is found in the secreted. Its subcellular location is the extracellular space. The protein localises to the apoplast. May play a role in plant defense. Probably has no oxalate oxidase activity even if the active site is conserved. In Arabidopsis thaliana (Mouse-ear cress), this protein is Germin-like protein subfamily 1 member 20 (GLP5A).